The following is a 563-amino-acid chain: MASGSGFLGQISSMEEADFAEKDPSGRYIRYDDVLGRGAFKTVYKAFDEVDGIEVAWNLVSIEDVMQMPGQLERLYSEVHLLKALKHENIIKLFYSWVDEKNKTINMITELFTSGSLRVYRKKHRKVDPKAIKNWARQILKGLNYLHSQNPPVIHRDLKCDNIFVNGNTGEVKIGDLGLATVLQQPTARSVIGTPEFMAPELYEEEYNELVDIYSFGMCMLEMVTCEYPYNECRNQAQIYKKVTSNIKPQSLGKVDDPQVRQFIEKCLLPASSRPTALELSKDPFLARDGGKDSALLASSSTSSKYVRPPQLEHLPMDVDHNENKSVSSNEDYPWSQTIELQRIAENKEFRLRGERSDDVTASMVLRIADPSGKCRIVHFAFYLESDTATAIAEEMVEELHLTSQEVVVIADMIDDFIMQLLSDRTSSHHNQNSPRLTHEDHEAANQQTVNSKDEEAAGQSMKSDISADYYFPYSANDGNAAMEAGRDAESMSSYLDSCSMMSTIYNLSISDNDYPEDLKTELNLIESQFNQSFQDLLKLKEDAIENAKRKWITKKQKAVNIS.

A Protein kinase domain is found at 29-286 (IRYDDVLGRG…ALELSKDPFL (258 aa)). ATP contacts are provided by residues 109-112 (TELF) and Lys159. Asp176 acts as the Proton acceptor in catalysis. Over residues 426–436 (TSSHHNQNSPR) the composition is skewed to polar residues. The interval 426-459 (TSSHHNQNSPRLTHEDHEAANQQTVNSKDEEAAG) is disordered. The residue at position 509 (Ser509) is a Phosphoserine.

The protein belongs to the protein kinase superfamily. Ser/Thr protein kinase family. WNK subfamily. In terms of assembly, interacts with RGS1 and GB1, but not with GPA1. The association with RGS1 at the plasma membrane is triggered by induction of glucose. Binds to EDM2 in nucleus. Autophosphorylated.

Its subcellular location is the nucleus. It carries out the reaction L-seryl-[protein] + ATP = O-phospho-L-seryl-[protein] + ADP + H(+). It catalyses the reaction L-threonyl-[protein] + ATP = O-phospho-L-threonyl-[protein] + ADP + H(+). Its function is as follows. Regulates flowering time by modulating the photoperiod pathway. Phosphorylates the vacuolar ATPase subunit C (VATC) and RGS1. Regulates EDM2 that, in turn, modulates development processes. The sequence is that of Serine/threonine-protein kinase WNK8 (WNK8) from Arabidopsis thaliana (Mouse-ear cress).